A 457-amino-acid polypeptide reads, in one-letter code: Acetylcholine receptor subunit alpha (457 aa).

The N-terminal stretch at 1-20 (MEPWPLLLLFSLCSAGLVLG) is a signal peptide. The Extracellular portion of the chain corresponds to 21–232 (SEHETRLVAK…YHFVMQRLPL (212 aa)). Cystine bridges form between cysteine 148–cysteine 162 and cysteine 212–cysteine 213. Asparagine 161 carries an N-linked (GlcNAc...) asparagine glycan. Residues 233 to 253 (YFIVNVIIPCLLFSFLTGLVF) form a helical membrane-spanning segment. Residues 254-264 (YLPTDSGEKMT) are Cytoplasmic-facing. Residues 265–285 (LSISVLLSLTVFLLVIVELIP) traverse the membrane as a helical segment. The Extracellular portion of the chain corresponds to 286-296 (STSSAVPLIGK). A helical membrane pass occupies residues 297 to 317 (YMLFTMVFVIASIIITVIVIN). Over 318-427 (THHRSPSTHV…EWKYVAMVMD (110 aa)) the chain is Cytoplasmic. The chain crosses the membrane as a helical span at residues 428-448 (HILLGVFMLVCIIGTLAVFAG). The Extracellular portion of the chain corresponds to 449–457 (RLIELNQQG).

Belongs to the ligand-gated ion channel (TC 1.A.9) family. Acetylcholine receptor (TC 1.A.9.1) subfamily. Alpha-1/CHRNA1 sub-subfamily. As to quaternary structure, one of the alpha chains that assemble within the acetylcholine receptor, a pentamer of two alpha chains, a beta, a delta, and a gamma (in immature muscle) or epsilon (in mature muscle) chains. The muscle heteropentamer composed of alpha-1, beta-1, delta, epsilon subunits interacts with the alpha-conotoxin ImII. In terms of assembly, is able to interact with other subunits of the acetylcholine receptor but is not assembled into functional acetylcholine-gated cation-selective channels. In terms of tissue distribution, isoform 1 is only expressed in skeletal muscle. Isoform 2 is constitutively expressed in skeletal muscle, brain, heart, kidney, liver, lung and thymus.

It localises to the postsynaptic cell membrane. The protein localises to the cell membrane. It carries out the reaction K(+)(in) = K(+)(out). It catalyses the reaction Na(+)(in) = Na(+)(out). Its function is as follows. Upon acetylcholine binding, the AChR responds by an extensive change in conformation that affects all subunits and leads to opening of an ion-conducting channel across the plasma membrane. In terms of biological role, non functional acetylcholine receptor alpha subunit which is not integrated into functional acetylcholine-gated cation-selective channels. The sequence is that of Acetylcholine receptor subunit alpha from Homo sapiens (Human).